The following is a 532-amino-acid chain: Metal-staphylopine-binding protein CntA (532 aa).

The signal sequence occupies residues Met-1–Gly-20. Cys-21 is lipidated: N-palmitoyl cysteine. Cys-21 carries the S-diacylglycerol cysteine lipid modification. 3 residues coordinate staphylopine: Arg-165, Arg-418, and Asn-448.

The protein belongs to the bacterial solute-binding protein 5 family. In terms of assembly, the complex is composed of two ATP-binding proteins (CntD and CntF), two transmembrane proteins (CntB and CntC) and a solute-binding protein (CntA).

It localises to the cell membrane. Part of the ABC transporter complex CntABCDF (Opp1) involved in the uptake of metal in complex with the metallophore staphylopine (StP). May be involved in the import of a large array of divalent metals ions such as nickel, cobalt, zinc, copper and iron. Binds the metal via the metallophore StP, and transfers the StP-metal complex to the membrane-bound permease. This Staphylococcus aureus (strain Mu50 / ATCC 700699) protein is Metal-staphylopine-binding protein CntA.